The primary structure comprises 248 residues: Acetoacetyl-CoA reductase (248 aa).

Residues 14–16 (GGI), arginine 42, and 90–94 (NAGIT) each bind NADP(+). Residues aspartate 96 and 149–152 (QFGQ) contribute to the substrate site. Tyrosine 155 acts as the Proton acceptor in catalysis. 185–188 (PGYT) is a binding site for NADP(+). Substrate contacts are provided by residues 186-187 (GY) and arginine 197.

This sequence belongs to the short-chain dehydrogenases/reductases (SDR) family.

Its subcellular location is the cytoplasm. It carries out the reaction a (3R)-3-hydroxyacyl-CoA + NADP(+) = a 3-oxoacyl-CoA + NADPH + H(+). Its pathway is biopolymer metabolism; poly-(R)-3-hydroxybutanoate biosynthesis. The protein is Acetoacetyl-CoA reductase (phaB) of Acinetobacter sp. (strain RA3849).